We begin with the raw amino-acid sequence, 419 residues long: D-galactonate dehydratase family member SEN1436 (419 aa).

Substrate is bound by residues glutamine 45 and histidine 129. The Proton donor/acceptor role is filled by tyrosine 160. Residue aspartate 225 coordinates Mg(2+). The Proton donor/acceptor role is filled by histidine 227. Positions 251 and 277 each coordinate Mg(2+). Residues glutamate 277, arginine 298, histidine 327, aspartate 331, and glutamate 354 each contribute to the substrate site.

This sequence belongs to the mandelate racemase/muconate lactonizing enzyme family. GalD subfamily. As to quaternary structure, homotetramer. Mg(2+) serves as cofactor.

The catalysed reaction is D-gluconate = 2-dehydro-3-deoxy-D-gluconate + H2O. Has low D-gluconate dehydratase activity (in vitro), suggesting that it has no significant role in D-gluconate degradation in vivo. Has no detectable activity with a panel of 70 other acid sugars (in vitro). This chain is D-galactonate dehydratase family member SEN1436, found in Salmonella enteritidis PT4 (strain P125109).